The following is a 291-amino-acid chain: Neugrin (291 aa).

The signal sequence occupies residues 1–15 (MAVTLSLLLGGRVCA). 2 disordered regions span residues 26–48 (GVAGPGPIGREPDPDSDWEPEER) and 155–270 (GSGN…DNFS). A Phosphoserine modification is found at Ser-41. N-linked (GlcNAc...) asparagine glycans are attached at residues Asn-158 and Asn-186. The span at 236-246 (KYSSDSESPRG) shows a compositional bias: polar residues. A glycan (N-linked (GlcNAc...) asparagine) is linked at Asn-268.

It belongs to the neugrin family. In terms of assembly, forms a regulatory protein-RNA complex, consisting of RCC1L, NGRN, RPUSD3, RPUSD4, TRUB2, FASTKD2 and 16S mt-rRNA. Interacts with 16S mt-rRNA; this interaction is direct. Expressed at high levels in heart, brain and skeletal muscle. In brain, mainly expressed in neurons rather than glial cells.

The protein localises to the nucleus. It is found in the secreted. The protein resides in the mitochondrion membrane. In terms of biological role, plays an essential role in mitochondrial ribosome biogenesis. As a component of a functional protein-RNA module, consisting of RCC1L, NGRN, RPUSD3, RPUSD4, TRUB2, FASTKD2 and 16S mitochondrial ribosomal RNA (16S mt-rRNA), controls 16S mt-rRNA abundance and is required for intra-mitochondrial translation of core subunits of the oxidative phosphorylation system. This is Neugrin from Homo sapiens (Human).